Consider the following 353-residue polypeptide: Photosystem II protein D1 (353 aa).

Threonine 2 is modified (N-acetylthreonine). The residue at position 2 (threonine 2) is a Phosphothreonine. 3 consecutive transmembrane segments (helical) span residues 29–46 (YIGW…TATS), 118–133 (HFLL…EWEL), and 142–156 (WIAV…AATA). Histidine 118 contacts chlorophyll a. Tyrosine 126 serves as a coordination point for pheophytin a. [CaMn4O5] cluster contacts are provided by aspartate 170 and glutamate 189. Residues 197-218 (FHMLGVAGVFGGSLFSAMHGSL) traverse the membrane as a helical segment. Chlorophyll a is bound at residue histidine 198. A quinone is bound by residues histidine 215 and 264–265 (SF). Histidine 215 lines the Fe cation pocket. Histidine 272 contacts Fe cation. The chain crosses the membrane as a helical span at residues 274-288 (FLAAWPVVGIWFTAL). 4 residues coordinate [CaMn4O5] cluster: histidine 332, glutamate 333, aspartate 342, and alanine 344. The propeptide occupies 345-353 (AVEVPSING).

The protein belongs to the reaction center PufL/M/PsbA/D family. In terms of assembly, PSII is composed of 1 copy each of membrane proteins PsbA, PsbB, PsbC, PsbD, PsbE, PsbF, PsbH, PsbI, PsbJ, PsbK, PsbL, PsbM, PsbT, PsbX, PsbY, PsbZ, Psb30/Ycf12, at least 3 peripheral proteins of the oxygen-evolving complex and a large number of cofactors. It forms dimeric complexes. The D1/D2 heterodimer binds P680, chlorophylls that are the primary electron donor of PSII, and subsequent electron acceptors. It shares a non-heme iron and each subunit binds pheophytin, quinone, additional chlorophylls, carotenoids and lipids. D1 provides most of the ligands for the Mn4-Ca-O5 cluster of the oxygen-evolving complex (OEC). There is also a Cl(-1) ion associated with D1 and D2, which is required for oxygen evolution. The PSII complex binds additional chlorophylls, carotenoids and specific lipids. is required as a cofactor. Tyr-161 forms a radical intermediate that is referred to as redox-active TyrZ, YZ or Y-Z. In terms of processing, C-terminally processed by CTPA; processing is essential to allow assembly of the oxygen-evolving complex and thus photosynthetic growth.

The protein localises to the plastid. Its subcellular location is the chloroplast thylakoid membrane. It carries out the reaction 2 a plastoquinone + 4 hnu + 2 H2O = 2 a plastoquinol + O2. Functionally, photosystem II (PSII) is a light-driven water:plastoquinone oxidoreductase that uses light energy to abstract electrons from H(2)O, generating O(2) and a proton gradient subsequently used for ATP formation. It consists of a core antenna complex that captures photons, and an electron transfer chain that converts photonic excitation into a charge separation. The D1/D2 (PsbA/PsbD) reaction center heterodimer binds P680, the primary electron donor of PSII as well as several subsequent electron acceptors. The chain is Photosystem II protein D1 from Cucumis sativus (Cucumber).